We begin with the raw amino-acid sequence, 71 residues long: Mitochondrial import protein 1 (71 aa).

Residues 22 to 44 (YAAINLGLPFLNGVMLGFGEIFA) traverse the membrane as a helical segment.

It belongs to the MIM1 family. In terms of assembly, component of the mitochondrial outer import machinery (MIM) complex containing at least mim1 and mim2. Interacts with mim2. Interacts with mitophagy receptor atg43.

The protein resides in the mitochondrion outer membrane. Its function is as follows. Component of the mitochondrial outer import machinery (MIM) complex that mediates transport of proteins into mitochondrial compartments. Promotes the insertion of tom70 into the outer mitochondrial membrane. Promotes the insertion of atg43 into the outer mitochondrial membrane. The MIM complex cooperates with the receptor tom70 in binding of precursor proteins and promotes their insertion and assembly into the outer membrane. Involved in import of the subset of proteins with multiple alpha-helical transmembrane segments. Required for the assembly of the TOM (translocase of outer membrane) receptor complex, which is responsible for the recognition and translocation of cytosolically synthesized mitochondrial preproteins. The protein is Mitochondrial import protein 1 of Schizosaccharomyces pombe (strain 972 / ATCC 24843) (Fission yeast).